We begin with the raw amino-acid sequence, 411 residues long: Corticotropin-releasing factor receptor 2 (411 aa).

A signal peptide (not cleaved) is located at residues 1 to 19 (MDAALLLSLLEANCSLALA). The Extracellular portion of the chain corresponds to 1-108 (MDAALLLSLL…EPILDDKQRK (108 aa)). 5 N-linked (GlcNAc...) asparagine glycosylation sites follow: asparagine 13, asparagine 41, asparagine 74, asparagine 86, and asparagine 94. 3 disulfides stabilise this stretch: cysteine 14–cysteine 50, cysteine 40–cysteine 83, and cysteine 64–cysteine 98. Residues 109-139 (YDLHYRIALIVNYLGHCVSVVALVAAFLLFL) form a helical membrane-spanning segment. Residues 140–146 (VLRSIRC) are Cytoplasmic-facing. The chain crosses the membrane as a helical span at residues 147-171 (LRNVIHWNLITTFILRNIAWFLLQL). At 172 to 185 (IDHEVHEGNEVWCR) the chain is on the extracellular side. A disulfide bridge links cysteine 184 with cysteine 254. The helical transmembrane segment at 186–214 (CITTIFNYFVVTNFFWMFVEGCYLHTAIV) threads the bilayer. Topologically, residues 215-221 (MTYSTEH) are cytoplasmic. Residues 222 to 249 (LRKWLFLFIGWCIPCPIIIAWAVGKLYY) form a helical membrane-spanning segment. Residues 250 to 265 (ENEQCWFGKEAGDLVD) are Extracellular-facing. Residues 266–291 (YIYQGPVMLVLLINFVFLFNIVRILM) form a helical membrane-spanning segment. Topologically, residues 292-302 (TKLRASTTSET) are cytoplasmic. Residues 303–327 (IQYRKAVKATLVLLPLLGITYMLFF) traverse the membrane as a helical segment. The Extracellular segment spans residues 328–334 (VNPGEDD). A helical transmembrane segment spans residues 335–364 (LSQIVFIYFNSFLQSFQGFFVSVFYCFFNG). Over 365-411 (EVRAALRKRWHRWQDHHALRVPVARAMSIPTSPTRISFHSIKQTAAV) the chain is Cytoplasmic.

It belongs to the G-protein coupled receptor 2 family. Monomer. Interacts with CRF, UCN, UCN2 and UCN3. Post-translationally, a N-glycosylation site within the signal peptide impedes its proper cleavage and function. In terms of tissue distribution, highly expressed in the heart. Also expressed in lungs, skeletal muscle, gastrointestinal tract, epididymis, and brain.

It localises to the cell membrane. Its function is as follows. G-protein coupled receptor for CRH (corticotropin-releasing factor), UCN (urocortin), UCN2 and UCN3. Has high affinity for UCN. Ligand binding causes a conformation change that triggers signaling via guanine nucleotide-binding proteins (G proteins) and down-stream effectors, such as adenylate cyclase. Promotes the activation of adenylate cyclase, leading to increased intracellular cAMP levels. The polypeptide is Corticotropin-releasing factor receptor 2 (Crhr2) (Mus musculus (Mouse)).